Here is a 189-residue protein sequence, read N- to C-terminus: Cytochrome b6-f complex subunit 4 (189 aa).

A run of 3 helical transmembrane segments spans residues 36–56, 103–123, and 139–159; these read LSYI…GLAV, LLGV…PFLE, and TVSL…ALPI.

This sequence belongs to the cytochrome b family. PetD subfamily. The 4 large subunits of the cytochrome b6-f complex are cytochrome b6, subunit IV (17 kDa polypeptide, petD), cytochrome f and the Rieske protein, while the 4 small subunits are petG, petL, petM and petN. The complex functions as a dimer.

It is found in the plastid. The protein resides in the chloroplast thylakoid membrane. In terms of biological role, component of the cytochrome b6-f complex, which mediates electron transfer between photosystem II (PSII) and photosystem I (PSI), cyclic electron flow around PSI, and state transitions. The chain is Cytochrome b6-f complex subunit 4 from Pinus koraiensis (Korean pine).